A 406-amino-acid polypeptide reads, in one-letter code: Lysine-specific demethylase 8 (406 aa).

Over residues 143-152 (KAERSEEPFS) the composition is skewed to basic and acidic residues. Residues 143 to 162 (KAERSEEPFSKKRKHDCKSE) form a disordered region. In terms of domain architecture, JmjC spans 270–406 (DQVPELKEDI…LSFSVSFWWS (137 aa)). Fe cation-binding residues include His311 and Asp313.

Requires Fe(2+) as cofactor.

The protein resides in the nucleus. It catalyses the reaction N(6),N(6)-dimethyl-L-lysyl(36)-[histone H3] + 2 2-oxoglutarate + 2 O2 = L-lysyl(36)-[histone H3] + 2 formaldehyde + 2 succinate + 2 CO2. Functionally, histone demethylase required for G2/M phase cell cycle progression. Specifically demethylates dimethylated 'Lys-36' (H3K36me2) of histone H3, an epigenetic repressive mark, thereby acting as a transcription activator. May play a role in the regulation of the circadian clock. This is Lysine-specific demethylase 8 (kdm8) from Danio rerio (Zebrafish).